Here is a 296-residue protein sequence, read N- to C-terminus: tRNA dimethylallyltransferase (296 aa).

9-16 (GPTAVGKT) is an ATP binding site. Residue 11–16 (TAVGKT) coordinates substrate. The interval 34–37 (DSRQ) is interaction with substrate tRNA.

The protein belongs to the IPP transferase family. In terms of assembly, monomer. It depends on Mg(2+) as a cofactor.

It carries out the reaction adenosine(37) in tRNA + dimethylallyl diphosphate = N(6)-dimethylallyladenosine(37) in tRNA + diphosphate. Functionally, catalyzes the transfer of a dimethylallyl group onto the adenine at position 37 in tRNAs that read codons beginning with uridine, leading to the formation of N6-(dimethylallyl)adenosine (i(6)A). This Chloroflexus aggregans (strain MD-66 / DSM 9485) protein is tRNA dimethylallyltransferase.